The sequence spans 426 residues: 26S proteasome regulatory subunit 7B (426 aa).

209–216 (GPPGTGKT) provides a ligand contact to ATP.

Belongs to the AAA ATPase family.

The protein localises to the cytoplasm. It is found in the nucleus. The 26S proteasome is involved in the ATP-dependent degradation of ubiquitinated proteins. The regulatory (or ATPase) complex confers ATP dependency and substrate specificity to the 26S complex. The polypeptide is 26S proteasome regulatory subunit 7B (RPT1B) (Oryza sativa subsp. japonica (Rice)).